A 187-amino-acid chain; its full sequence is Probable nicotinate-nucleotide adenylyltransferase (187 aa).

Belongs to the NadD family.

The catalysed reaction is nicotinate beta-D-ribonucleotide + ATP + H(+) = deamido-NAD(+) + diphosphate. The protein operates within cofactor biosynthesis; NAD(+) biosynthesis; deamido-NAD(+) from nicotinate D-ribonucleotide: step 1/1. Catalyzes the reversible adenylation of nicotinate mononucleotide (NaMN) to nicotinic acid adenine dinucleotide (NaAD). The sequence is that of Probable nicotinate-nucleotide adenylyltransferase from Agrobacterium fabrum (strain C58 / ATCC 33970) (Agrobacterium tumefaciens (strain C58)).